The chain runs to 166 residues: 6,7-dimethyl-8-ribityllumazine synthase (166 aa).

5-amino-6-(D-ribitylamino)uracil contacts are provided by residues Phe-24, 58-60 (ALE), and 82-84 (AVI). Position 87–88 (87–88 (ET)) interacts with (2S)-2-hydroxy-3-oxobutyl phosphate. Catalysis depends on His-90, which acts as the Proton donor. Asn-115 contributes to the 5-amino-6-(D-ribitylamino)uracil binding site. Arg-129 is a binding site for (2S)-2-hydroxy-3-oxobutyl phosphate.

Belongs to the DMRL synthase family.

The catalysed reaction is (2S)-2-hydroxy-3-oxobutyl phosphate + 5-amino-6-(D-ribitylamino)uracil = 6,7-dimethyl-8-(1-D-ribityl)lumazine + phosphate + 2 H2O + H(+). It participates in cofactor biosynthesis; riboflavin biosynthesis; riboflavin from 2-hydroxy-3-oxobutyl phosphate and 5-amino-6-(D-ribitylamino)uracil: step 1/2. Its function is as follows. Catalyzes the formation of 6,7-dimethyl-8-ribityllumazine by condensation of 5-amino-6-(D-ribitylamino)uracil with 3,4-dihydroxy-2-butanone 4-phosphate. This is the penultimate step in the biosynthesis of riboflavin. The polypeptide is 6,7-dimethyl-8-ribityllumazine synthase (Ralstonia pickettii (strain 12J)).